We begin with the raw amino-acid sequence, 445 residues long: UDP-N-acetylmuramoylalanine--D-glutamate ligase (445 aa).

117-123 lines the ATP pocket; that stretch reads GSNGKTT.

The protein belongs to the MurCDEF family.

It localises to the cytoplasm. It carries out the reaction UDP-N-acetyl-alpha-D-muramoyl-L-alanine + D-glutamate + ATP = UDP-N-acetyl-alpha-D-muramoyl-L-alanyl-D-glutamate + ADP + phosphate + H(+). The protein operates within cell wall biogenesis; peptidoglycan biosynthesis. Its function is as follows. Cell wall formation. Catalyzes the addition of glutamate to the nucleotide precursor UDP-N-acetylmuramoyl-L-alanine (UMA). The polypeptide is UDP-N-acetylmuramoylalanine--D-glutamate ligase (Neisseria gonorrhoeae (strain NCCP11945)).